Reading from the N-terminus, the 83-residue chain is MRLFSGMNNQYTRREVFCRNTCHDLKHFWEREIGKQTYYRESEERRLGRSALRKLREEWKQRLETKLRLRNNPEDTEKRTNVG.

This sequence belongs to the FAM240 family.

The protein is Protein FAM240A of Homo sapiens (Human).